The chain runs to 149 residues: Nucleoside diphosphate kinase (149 aa).

Lys9, Phe57, Arg85, Thr91, Arg102, and Asn112 together coordinate ATP. Residue His115 is the Pros-phosphohistidine intermediate of the active site.

This sequence belongs to the NDK family. In terms of assembly, homotetramer. The cofactor is Mg(2+).

It localises to the cytoplasm. The catalysed reaction is a 2'-deoxyribonucleoside 5'-diphosphate + ATP = a 2'-deoxyribonucleoside 5'-triphosphate + ADP. The enzyme catalyses a ribonucleoside 5'-diphosphate + ATP = a ribonucleoside 5'-triphosphate + ADP. Its function is as follows. Major role in the synthesis of nucleoside triphosphates other than ATP. The ATP gamma phosphate is transferred to the NDP beta phosphate via a ping-pong mechanism, using a phosphorylated active-site intermediate. The chain is Nucleoside diphosphate kinase from Acaryochloris marina (strain MBIC 11017).